A 217-amino-acid chain; its full sequence is Probable transaldolase (217 aa).

Residue Lys-83 is the Schiff-base intermediate with substrate of the active site.

It belongs to the transaldolase family. Type 3B subfamily.

Its subcellular location is the cytoplasm. The catalysed reaction is D-sedoheptulose 7-phosphate + D-glyceraldehyde 3-phosphate = D-erythrose 4-phosphate + beta-D-fructose 6-phosphate. Its pathway is carbohydrate degradation; pentose phosphate pathway; D-glyceraldehyde 3-phosphate and beta-D-fructose 6-phosphate from D-ribose 5-phosphate and D-xylulose 5-phosphate (non-oxidative stage): step 2/3. In terms of biological role, transaldolase is important for the balance of metabolites in the pentose-phosphate pathway. The chain is Probable transaldolase from Jannaschia sp. (strain CCS1).